Reading from the N-terminus, the 299-residue chain is Oxygen-dependent coproporphyrinogen-III oxidase (299 aa).

Position 92 (serine 92) interacts with substrate. Histidine 96 and histidine 106 together coordinate a divalent metal cation. Histidine 106 (proton donor) is an active-site residue. 108–110 (NVR) contributes to the substrate binding site. A divalent metal cation is bound by residues histidine 145 and histidine 175. Residues 240 to 275 (YVEFNLVWDRGTLFGLQTGGRTESILMSMPPLVRWE) are important for dimerization. 258–260 (GGR) is a substrate binding site.

This sequence belongs to the aerobic coproporphyrinogen-III oxidase family. In terms of assembly, homodimer. A divalent metal cation serves as cofactor.

The protein localises to the cytoplasm. It catalyses the reaction coproporphyrinogen III + O2 + 2 H(+) = protoporphyrinogen IX + 2 CO2 + 2 H2O. The protein operates within porphyrin-containing compound metabolism; protoporphyrin-IX biosynthesis; protoporphyrinogen-IX from coproporphyrinogen-III (O2 route): step 1/1. In terms of biological role, involved in the heme biosynthesis. Catalyzes the aerobic oxidative decarboxylation of propionate groups of rings A and B of coproporphyrinogen-III to yield the vinyl groups in protoporphyrinogen-IX. The chain is Oxygen-dependent coproporphyrinogen-III oxidase from Salmonella arizonae (strain ATCC BAA-731 / CDC346-86 / RSK2980).